Reading from the N-terminus, the 548-residue chain is MKLCLLALGAAVAAAPTATLANGDTITGLNAIVNEKFLGIPFAEPPVGTLRFKPPVPYSASLNGQQFTSYGPSCMQMNPMGSFEDTLPKNARHLVLQSKIFQVVLPNDEDCLTINVIRPPGTRASAGLPVMLWIFGGGFELGGSSLFPGDQMVAKSVLMGKPVIHVSMNYRVASWGFLAGPDIQNEGSGNAGLHDQRLAMQWVADNIAGFGGDPSKVTIYGESAGSMSTFVHLVWNDGDNTYNGKPLFRAAIMQSGCMVPSDPVDGTYGTEIYNQVVASAGCGSASDKLACLRGLSQDTLYQATSDTPGVLAYPSLRLSYLPRPDGTFITDDMYALVRDGKYAHVPVIIGDQNDEGTLFGLSSLNVTTDAQARAYFKQSFIHASDAEIDTLMAAYTSDITQGSPFDTGIFNAITPQFKRISALLGDLAFTLARRYFLNYYQGGTKYSFLSKQLSGLPVLGTFHGNDIIWQDYLVGSGSVIYNNAFIAFANDLDPNKAGLWTNWPTYTSSSQSGNNLMQINGLGLYTGKDNFRPDAYSALFSNPPSFFV.

A signal peptide spans 1–14 (MKLCLLALGAAVAA). A disulfide bridge connects residues Cys-74 and Cys-111. Residue Ser-223 is the Acyl-ester intermediate of the active site. A disulfide bridge connects residues Cys-282 and Cys-291. The Charge relay system role is filled by Glu-355. A glycan (N-linked (GlcNAc...) asparagine) is linked at Asn-365. The Charge relay system role is filled by His-463.

This sequence belongs to the type-B carboxylesterase/lipase family.

The catalysed reaction is a triacylglycerol + H2O = a diacylglycerol + a fatty acid + H(+). The chain is Lipase 2 (LIP2) from Diutina rugosa (Yeast).